Consider the following 234-residue polypeptide: Bromodomain-containing protein DDB_G0271118 (234 aa).

The Bromo domain occupies 1 to 60 (MDLGTIKGELDNNGYSTIKDFTADVRLMFENALTYNADSSPIWKHAKTLLYFHRKHDEHV). Low complexity predominate over residues 134–194 (NNNSNNNNNN…SSSSSSSSSS (61 aa)). The segment at 134 to 209 (NNNSNNNNNN…KKYSDEERRN (76 aa)) is disordered.

This Dictyostelium discoideum (Social amoeba) protein is Bromodomain-containing protein DDB_G0271118.